Reading from the N-terminus, the 595-residue chain is NADH-quinone oxidoreductase subunit C/D (595 aa).

An NADH dehydrogenase I subunit C region spans residues 1 to 185; the sequence is MTDLTAQAAC…DPFELTKAKQ (185 aa). The interval 209-595 is NADH dehydrogenase I subunit D; the sequence is DFMFLNLGPN…IDFVMSDVDR (387 aa).

It in the N-terminal section; belongs to the complex I 30 kDa subunit family. This sequence in the C-terminal section; belongs to the complex I 49 kDa subunit family. In terms of assembly, NDH-1 is composed of 13 different subunits. Subunits NuoB, CD, E, F, and G constitute the peripheral sector of the complex.

The protein resides in the cell inner membrane. The catalysed reaction is a quinone + NADH + 5 H(+)(in) = a quinol + NAD(+) + 4 H(+)(out). NDH-1 shuttles electrons from NADH, via FMN and iron-sulfur (Fe-S) centers, to quinones in the respiratory chain. The immediate electron acceptor for the enzyme in this species is believed to be ubiquinone. Couples the redox reaction to proton translocation (for every two electrons transferred, four hydrogen ions are translocated across the cytoplasmic membrane), and thus conserves the redox energy in a proton gradient. The sequence is that of NADH-quinone oxidoreductase subunit C/D from Enterobacter sp. (strain 638).